Reading from the N-terminus, the 448-residue chain is Beta-glucosidase A (448 aa).

Glu166 functions as the Proton donor in the catalytic mechanism. Glu355 acts as the Nucleophile in catalysis.

It belongs to the glycosyl hydrolase 1 family.

The enzyme catalyses Hydrolysis of terminal, non-reducing beta-D-glucosyl residues with release of beta-D-glucose.. Its pathway is glycan metabolism; cellulose degradation. The polypeptide is Beta-glucosidase A (bglA) (Acetivibrio thermocellus (strain ATCC 27405 / DSM 1237 / JCM 9322 / NBRC 103400 / NCIMB 10682 / NRRL B-4536 / VPI 7372) (Clostridium thermocellum)).